Here is a 340-residue protein sequence, read N- to C-terminus: Ketol-acid reductoisomerase (NADP(+)) (340 aa).

Residues 3-183 (INVFYDKDCN…GGGRTGIIET (181 aa)) form the KARI N-terminal Rossmann domain. NADP(+)-binding positions include 26–29 (FGSQ), R49, S54, and 84–87 (DENQ). H109 is an active-site residue. Residue G135 participates in NADP(+) binding. Residues 184–329 (TFKDETETDL…VKLRNMMPWI (146 aa)) enclose the KARI C-terminal knotted domain. Residues D192, E196, E228, and E232 each coordinate Mg(2+). S253 is a substrate binding site.

It belongs to the ketol-acid reductoisomerase family. Mg(2+) is required as a cofactor.

It carries out the reaction (2R)-2,3-dihydroxy-3-methylbutanoate + NADP(+) = (2S)-2-acetolactate + NADPH + H(+). It catalyses the reaction (2R,3R)-2,3-dihydroxy-3-methylpentanoate + NADP(+) = (S)-2-ethyl-2-hydroxy-3-oxobutanoate + NADPH + H(+). It functions in the pathway amino-acid biosynthesis; L-isoleucine biosynthesis; L-isoleucine from 2-oxobutanoate: step 2/4. Its pathway is amino-acid biosynthesis; L-valine biosynthesis; L-valine from pyruvate: step 2/4. Functionally, involved in the biosynthesis of branched-chain amino acids (BCAA). Catalyzes an alkyl-migration followed by a ketol-acid reduction of (S)-2-acetolactate (S2AL) to yield (R)-2,3-dihydroxy-isovalerate. In the isomerase reaction, S2AL is rearranged via a Mg-dependent methyl migration to produce 3-hydroxy-3-methyl-2-ketobutyrate (HMKB). In the reductase reaction, this 2-ketoacid undergoes a metal-dependent reduction by NADPH to yield (R)-2,3-dihydroxy-isovalerate. The polypeptide is Ketol-acid reductoisomerase (NADP(+)) (Aliarcobacter butzleri (strain RM4018) (Arcobacter butzleri)).